The primary structure comprises 509 residues: ATP synthase subunit alpha (509 aa).

Position 169 to 176 (169 to 176) interacts with ATP; sequence GDRQTGKT.

This sequence belongs to the ATPase alpha/beta chains family. In terms of assembly, F-type ATPases have 2 components, CF(1) - the catalytic core - and CF(0) - the membrane proton channel. CF(1) has five subunits: alpha(3), beta(3), gamma(1), delta(1), epsilon(1). CF(0) has three main subunits: a(1), b(2) and c(9-12). The alpha and beta chains form an alternating ring which encloses part of the gamma chain. CF(1) is attached to CF(0) by a central stalk formed by the gamma and epsilon chains, while a peripheral stalk is formed by the delta and b chains.

It is found in the cell inner membrane. The enzyme catalyses ATP + H2O + 4 H(+)(in) = ADP + phosphate + 5 H(+)(out). Produces ATP from ADP in the presence of a proton gradient across the membrane. The alpha chain is a regulatory subunit. The protein is ATP synthase subunit alpha of Mesorhizobium japonicum (strain LMG 29417 / CECT 9101 / MAFF 303099) (Mesorhizobium loti (strain MAFF 303099)).